Reading from the N-terminus, the 769-residue chain is P-selectin (769 aa).

Residues 1–32 (MASCPKAIWSWRFQRVVFRSVQLLCFSILIFE) form the signal peptide. Residues 33-717 (LMTQKEVSAW…QEALTYIGGA (685 aa)) are Extracellular-facing. Asn54 and Asn80 each carry an N-linked (GlcNAc...) asparagine glycan. The C-type lectin domain maps to 58–158 (AFCQKYYTDL…PCGKRKRALC (101 aa)). Cystine bridges form between Cys60–Cys158, Cys131–Cys150, Cys163–Cys174, Cys168–Cys183, Cys185–Cys194, Cys200–Cys244, Cys230–Cys257, Cys262–Cys306, Cys292–Cys319, Cys324–Cys368, Cys354–Cys381, Cys386–Cys430, Cys416–Cys443, Cys448–Cys492, Cys478–Cys505, Cys510–Cys554, Cys540–Cys567, Cys581–Cys625, Cys611–Cys638, Cys643–Cys687, and Cys673–Cys700. Ca(2+) is bound by residues Glu121, Asn123, and Asn124. Residue Asn123 coordinates a carbohydrate. Glu133 and Asn146 together coordinate a carbohydrate. Ca(2+) is bound by residues Asn146 and Asp147. Residues 159-195 (YRASCQDMSCSKQGECIETIGNYTCSCYPGFYGPECE) form the EGF-like domain. Asn180 is a glycosylation site (N-linked (GlcNAc...) asparagine). Sushi domains lie at 198–259 (RECG…QCVA), 260–321 (VQCP…VCKA), 322–383 (IACE…VCQA), 384–445 (LQCQ…ECQA), 446–507 (VTCA…TCEA), 508–569 (SKCP…SCKV), 579–640 (LRCP…TCRA), and 641–702 (VKCS…TCQA). Residues Asn212 and Asn219 are each glycosylated (N-linked (GlcNAc...) asparagine). A glycan (N-linked (GlcNAc...) asparagine) is linked at Asn347. Asn398 carries an N-linked (GlcNAc...) asparagine glycan. Asn604 is a glycosylation site (N-linked (GlcNAc...) asparagine). N-linked (GlcNAc...) asparagine glycosylation is found at Asn655, Asn662, and Asn680. The chain crosses the membrane as a helical span at residues 718 to 734 (AAGTTGLVTSSILLALL). Residues 735–769 (RRRRRQKDDGKSPLNPQSHLGTYGVFTNAAFDPSP) are Cytoplasmic-facing. The interval 740 to 769 (QKDDGKSPLNPQSHLGTYGVFTNAAFDPSP) is disordered. Residues 757–760 (YGVF) carry the Endocytosis signal motif. An interaction with SNX17 region spans residues 760–769 (FTNAAFDPSP).

It belongs to the selectin/LECAM family. As to quaternary structure, interacts with SNX17. Interacts with SELPLG/PSGL1 and PODXL2 and mediates neutrophil adhesion and leukocyte rolling. This interaction requires the sialyl-Lewis X epitope of SELPLG and PODXL2, and specific tyrosine sulfation on SELPLG. Interacts (via C-type lectin domain) with alpha-IIb/beta3 integrin ITGA2B:ITGB3 and alpha-V/beta-3 integrin ITGAV:ITGB3. Interacts with alpha5/beta1 integrin ITGA5:ITGB1 and alpha4/beta1 integrin ITGA4:ITGB.

It is found in the cell membrane. Ca(2+)-dependent receptor for myeloid cells that binds to carbohydrates on neutrophils and monocytes. Mediates the interaction of activated endothelial cells or platelets with leukocytes. The ligand recognized is sialyl-Lewis X. Mediates rapid rolling of leukocyte rolling over vascular surfaces during the initial steps in inflammation through interaction with SELPLG. Mediates cell-cell interactions and cell adhesion via the interaction with integrin alpha-IIb/beta3 (ITGA2B:ITGB3) and integrin alpha-V/beta-3 (ITGAV:ITGB3). The protein is P-selectin (SELP) of Ovis aries (Sheep).